The following is a 1388-amino-acid chain: Rho-associated protein kinase 2 (1388 aa).

The disordered stretch occupies residues 1–26; it reads MSRPPPTGKMPGAPEAAPGDGAGAGR. The region spanning 92 to 354 is the Protein kinase domain; that stretch reads YDVVKVIGRG…VEEIKQHPFF (263 aa). Residues 98-106 and Lys-121 contribute to the ATP site; that span reads IGRGAFGEV. Asp-214 functions as the Proton acceptor in the catalytic mechanism. Positions 357-425 constitute an AGC-kinase C-terminal domain; that stretch reads DQWNWDNIRE…FRENLLLSDS (69 aa). The segment at 363 to 784 is interaction with PPP1R12A; sequence NIRETAAPVV…LNELLKQKDV (422 aa). The interval 373-420 is interaction with NPM1; the sequence is PELSSDIDSSNFDDIEDDKGDVETFPIPKAFVGNQLPFIGFTYFRENL. At Thr-414 the chain carries Phosphothreonine; by ROCK2. Positions 439-1131 form a coiled coil; sequence SEESQEIQKK…QLQALHIGMD (693 aa). Residues 497–573 form the REM-1 domain; the sequence is TLRQLEREKA…LDEANALLRT (77 aa). A compositionally biased stretch (basic and acidic residues) spans 512-530; it reads NAEYQRKADHEADKKRNLE. The segment at 512-532 is disordered; that stretch reads NAEYQRKADHEADKKRNLEND. Residue Tyr-722 is modified to Phosphotyrosine; by SRC. In terms of domain architecture, RhoBD spans 979–1047; sequence TSDVANLANE…LAEIMNRKEP (69 aa). The tract at residues 979-1047 is RHOA binding; it reads TSDVANLANE…LAEIMNRKEP (69 aa). Ser-1137 is modified (phosphoserine). The region spanning 1150–1349 is the PH domain; that stretch reads ESRLEGWLSL…WVSRLVKKIP (200 aa). Thr-1212 is subject to Phosphothreonine. The segment at 1260 to 1315 adopts a Phorbol-ester/DAG-type zinc-finger fold; the sequence is GHEFIPTLYHFPTNCEACMKPLWHMFKPPPALECRRCHIKCHKDHMDKKEEIIAPC. Residues 1345–1388 form a disordered region; the sequence is VKKIPKKPPAPDPFARSSPRTSMKIQQNQSIRRPSRQLAPNKPS. Phosphoserine is present on residues Ser-1362 and Ser-1374. A compositionally biased stretch (polar residues) spans 1362 to 1376; the sequence is SPRTSMKIQQNQSIR.

The protein belongs to the protein kinase superfamily. AGC Ser/Thr protein kinase family. As to quaternary structure, homodimer. Interacts with IRS1. Interacts with RAF1. Interacts with RHOA (activated by GTP), RHOB and RHOC. Interacts with PPP1R12A. Interacts with EP300. Interacts with CHORDC1. Interacts with BRCA2. Interacts with NPM1; this interaction enhances ROCK2 activity. Interacts with SORL1. Interacts with PJVK. The cofactor is Mg(2+). Post-translationally, autophosphorylated. Phosphorylation at Tyr-722 reduces its binding to RHOA and is crucial for focal adhesion dynamics. Dephosphorylation by PTPN11 stimulates its RHOA binding activity. Cleaved by granzyme B during apoptosis. This leads to constitutive activation of the kinase and membrane blebbing. In terms of tissue distribution, highly expressed in brain, heart, lung, liver, stomach, spleen, kidney, testis, muscle, embryo and placenta. Isoform 2 is expressed predominantly in the skeletal muscle.

Its subcellular location is the cytoplasm. The protein localises to the cell membrane. It localises to the nucleus. The protein resides in the cytoskeleton. It is found in the microtubule organizing center. Its subcellular location is the centrosome. It carries out the reaction L-seryl-[protein] + ATP = O-phospho-L-seryl-[protein] + ADP + H(+). It catalyses the reaction L-threonyl-[protein] + ATP = O-phospho-L-threonyl-[protein] + ADP + H(+). Activated by RHOA binding. Inhibited by Y-27632. Functionally, protein kinase which is a key regulator of actin cytoskeleton and cell polarity. Involved in regulation of smooth muscle contraction, actin cytoskeleton organization, stress fiber and focal adhesion formation, neurite retraction, cell adhesion and motility via phosphorylation of ADD1, BRCA2, CNN1, EZR, DPYSL2, EP300, MSN, MYL9/MLC2, NPM1, RDX, PPP1R12A and VIM. Phosphorylates SORL1 and IRF4. Acts as a negative regulator of VEGF-induced angiogenic endothelial cell activation. Positively regulates the activation of p42/MAPK1-p44/MAPK3 and of p90RSK/RPS6KA1 during myogenic differentiation. Plays an important role in the timely initiation of centrosome duplication. Inhibits keratinocyte terminal differentiation. May regulate closure of the eyelids and ventral body wall through organization of actomyosin bundles. Plays a critical role in the regulation of spine and synaptic properties in the hippocampus. Plays a role in placental homeostasis during the perinatal period. Plays an important role in generating the circadian rhythm of the aortic myofilament Ca(2+) sensitivity and vascular contractility by modulating the myosin light chain phosphorylation. The chain is Rho-associated protein kinase 2 (Rock2) from Mus musculus (Mouse).